The chain runs to 142 residues: MPPKPAEKKPSSTAGKAPASSAGKAPAEAAKKTSKAPAKSGEKKKATKVRKETYSTYIYRVLKQVHPDTGISNKAMAILNSFVQDIFERIATEASKLASYNKKSTISSREIQTAVRLILPGELSKHAISEGTKSVTKFSSSK.

The span at 1–10 (MPPKPAEKKP) shows a compositional bias: basic and acidic residues. The interval 1–50 (MPPKPAEKKPSSTAGKAPASSAGKAPAEAAKKTSKAPAKSGEKKKATKVR) is disordered. N6-acetyllysine; alternate is present on residues K8 and K9. Glycyl lysine isopeptide (Lys-Gly) (interchain with G-Cter in SUMO); alternate cross-links involve residues K8 and K9. The span at 11-28 (SSTAGKAPASSAGKAPAE) shows a compositional bias: low complexity. An N6-acetyllysine modification is found at K24. Positions 40–50 (SGEKKKATKVR) are enriched in basic and acidic residues. A Glycyl lysine isopeptide (Lys-Gly) (interchain with G-Cter in ubiquitin) cross-link involves residue K137.

It belongs to the histone H2B family. In terms of assembly, the nucleosome is a histone octamer containing two molecules each of H2A, H2B, H3 and H4 assembled in one H3-H4 heterotetramer and two H2A-H2B heterodimers. The octamer wraps approximately 147 bp of DNA. In terms of processing, monoubiquitinated by the UBC2-BRE1 complex to form H2BK123ub1. H2BK123ub1 gives a specific tag for epigenetic transcriptional activation and is also prerequisite for H3K4me and H3K79me formation. H2BK123ub1 also modulates the formation of double-strand breaks during meiosis and is a prerequisite for DNA-damage checkpoint activation. Post-translationally, acetylation of N-terminal lysines and particularly formation of H2BK11ac has a positive effect on transcription. Sumoylation to form H2BK6su or H2BK7su occurs preferentially near the telomeres and represses gene transcription.

Its subcellular location is the nucleus. The protein localises to the chromosome. Its function is as follows. Core component of nucleosome. Nucleosomes wrap and compact DNA into chromatin, limiting DNA accessibility to the cellular machineries which require DNA as a template. Histones thereby play a central role in transcription regulation, DNA repair, DNA replication and chromosomal stability. DNA accessibility is regulated via a complex set of post-translational modifications of histones, also called histone code, and nucleosome remodeling. The polypeptide is Histone H2B (HTB1) (Mycosarcoma maydis (Corn smut fungus)).